A 337-amino-acid chain; its full sequence is Bifunctional methylenetetrahydrofolate dehydrogenase/cyclohydrolase, mitochondrial (337 aa).

The transit peptide at 1–30 (MATALCPLRALGQTAFRPRTRRLHLSAPRA) directs the protein to the mitochondrion. Substrate-binding positions include 79–83 (YVLNK) and 126–128 (VQL). Residues 195 to 197 (GRS) and arginine 228 contribute to the NAD(+) site. Substrate is bound at residue 304 to 308 (PGGVG).

The protein belongs to the tetrahydrofolate dehydrogenase/cyclohydrolase family. Mg(2+) is required as a cofactor.

The protein localises to the mitochondrion. The catalysed reaction is (6R)-5,10-methylene-5,6,7,8-tetrahydrofolate + NAD(+) = (6R)-5,10-methenyltetrahydrofolate + NADH. It catalyses the reaction (6R)-5,10-methenyltetrahydrofolate + H2O = (6R)-10-formyltetrahydrofolate + H(+). In terms of biological role, although its dehydrogenase activity is NAD-specific, it can also utilize NADP at a reduced efficiency. The polypeptide is Bifunctional methylenetetrahydrofolate dehydrogenase/cyclohydrolase, mitochondrial (MTHFD2) (Gallus gallus (Chicken)).